Reading from the N-terminus, the 1234-residue chain is DNA-directed RNA polymerase subunit beta (1234 aa).

Residues 1169-1234 (ESVDEDADEL…LDLDDFGDEH (66 aa)) are disordered. Composition is skewed to acidic residues over residues 1171 to 1180 (VDEDADELEV) and 1191 to 1234 (EKEE…GDEH).

The protein belongs to the RNA polymerase beta chain family. As to quaternary structure, the RNAP catalytic core consists of 2 alpha, 1 beta, 1 beta' and 1 omega subunit. When a sigma factor is associated with the core the holoenzyme is formed, which can initiate transcription.

It carries out the reaction RNA(n) + a ribonucleoside 5'-triphosphate = RNA(n+1) + diphosphate. DNA-dependent RNA polymerase catalyzes the transcription of DNA into RNA using the four ribonucleoside triphosphates as substrates. The chain is DNA-directed RNA polymerase subunit beta from Clostridium botulinum (strain Langeland / NCTC 10281 / Type F).